The chain runs to 141 residues: Vasotocin-neurophysin VT (141 aa).

Cys-1 and Cys-6 are joined by a disulfide. Glycine amide is present on Gly-9. 7 disulfide bridges follow: Cys-22–Cys-66, Cys-25–Cys-39, Cys-33–Cys-56, Cys-40–Cys-46, Cys-73–Cys-85, Cys-79–Cys-97, and Cys-86–Cys-91. An N-linked (GlcNAc...) asparagine glycan is attached at Asn-117.

The protein belongs to the vasopressin/oxytocin family. In terms of processing, seven disulfide bonds are present in neurophysin.

The protein resides in the secreted. Vasotocin is an antidiuretic hormone. This Pelophylax lessonae (Pool frog) protein is Vasotocin-neurophysin VT.